The chain runs to 223 residues: Endonuclease V (223 aa).

Aspartate 35 and aspartate 103 together coordinate Mg(2+).

This sequence belongs to the endonuclease V family. The cofactor is Mg(2+).

It is found in the cytoplasm. It carries out the reaction Endonucleolytic cleavage at apurinic or apyrimidinic sites to products with a 5'-phosphate.. DNA repair enzyme involved in the repair of deaminated bases. Selectively cleaves double-stranded DNA at the second phosphodiester bond 3' to a deoxyinosine leaving behind the intact lesion on the nicked DNA. In Salmonella enteritidis PT4 (strain P125109), this protein is Endonuclease V.